The sequence spans 501 residues: MFSNQYIQQRIHKANSLREEGKNPYKNGLKRSLTNAAFLEKYAYVKGLEEPKDKEKCESIVGRVKLLRLMGKACFIKIEDESAILQAYVSQNELNDEFKSLKKHLEVGDIVLVKGFPFATKTGELSVHALEFHILSKTIVPLPEKFHGLSDIELRYRQRYLDLIVNPSVKDVFKKRSLIVSSVRKFFETEGFLEVETPMMHPIPGGANARPFITYHNALEIERYLRIAPELYLKRLIVGGFEAVFEINRNFRNEGMDHSHNPEFTMIEFYWAYHTYEDLIELSKRLFDYLLKTLNLPSKIIYNDMEVDFNQTSVISYLDALETIGGISKDILEKEDRLLAYLLEQSIKVEPDLTYGKLLAEAFDHFVEHQLINPTFVTQYPIEISPLARRNDSNPNIADRFELFIAGKEIANGFSELNDPLDQLERFKNQVAEKEKGDEEAQYMDEDYVWALAHGMPPTAGQGIGIDRLVMLLTGAKSIKDVILFPAMRPVKNDFNVESEE.

Mg(2+) is bound by residues glutamate 402 and glutamate 409.

Belongs to the class-II aminoacyl-tRNA synthetase family. Homodimer. It depends on Mg(2+) as a cofactor.

It localises to the cytoplasm. It catalyses the reaction tRNA(Lys) + L-lysine + ATP = L-lysyl-tRNA(Lys) + AMP + diphosphate. This Helicobacter pylori (strain Shi470) protein is Lysine--tRNA ligase.